We begin with the raw amino-acid sequence, 301 residues long: Ribonuclease H2 subunit A (301 aa).

Met-1 bears the N-acetylmethionine mark. Residues 28 to 251 form the RNase H type-2 domain; sequence PCVLGVDEAG…AQAILEKEAE (224 aa). A divalent metal cation contacts are provided by Asp-34, Glu-35, and Asp-142. A Phosphothreonine modification is found at Thr-217. Ser-258 carries the post-translational modification Phosphoserine.

It belongs to the RNase HII family. Eukaryotic subfamily. As to quaternary structure, the RNase H2 complex is a heterotrimer composed of the catalytic subunit RNASEH2A and the non-catalytic subunits RNASEH2B and RNASEH2C. Requires Mn(2+) as cofactor. Mg(2+) is required as a cofactor.

The protein resides in the nucleus. It carries out the reaction Endonucleolytic cleavage to 5'-phosphomonoester.. In terms of biological role, catalytic subunit of RNase HII, an endonuclease that specifically degrades the RNA of RNA:DNA hybrids. Participates in DNA replication, possibly by mediating the removal of lagging-strand Okazaki fragment RNA primers during DNA replication. Mediates the excision of single ribonucleotides from DNA:RNA duplexes. The chain is Ribonuclease H2 subunit A (Rnaseh2a) from Rattus norvegicus (Rat).